A 115-amino-acid chain; its full sequence is U3-lycotoxin-Ls1a (115 aa).

Positions 1–20 are cleaved as a signal peptide; it reads MKFVLLFGVLLVTFFSYSSA. Positions 21 to 44 are excised as a propeptide; that stretch reads EMLDDFDQADEDELLSLIEKGEAR. 4 disulfide bridges follow: cysteine 48/cysteine 63, cysteine 55/cysteine 72, cysteine 62/cysteine 87, and cysteine 74/cysteine 85.

Belongs to the neurotoxin 19 (CSTX) family. 01 subfamily. In terms of tissue distribution, expressed by the venom gland.

Its subcellular location is the secreted. This Lycosa singoriensis (Wolf spider) protein is U3-lycotoxin-Ls1a.